Reading from the N-terminus, the 754-residue chain is Subtilisin-like protease SBT3.12 (754 aa).

The N-terminal stretch at 1–28 (MGIVKGRSRAGLFIGFLFIVNVGFCVFA) is a signal peptide. Positions 29–117 (QESSNEERKI…VAPNRKVELQ (89 aa)) are cleaved as a propeptide — activation peptide. In terms of domain architecture, Inhibitor I9 spans 39 to 116 (YVVHLGVRRH…SVAPNRKVEL (78 aa)). The Peptidase S8 domain occupies 121–606 (IYDYLGLSPS…AGLVNAERAK (486 aa)). Catalysis depends on D151, which acts as the Charge relay system. N206 carries an N-linked (GlcNAc...) asparagine glycan. The active-site Charge relay system is H224. N-linked (GlcNAc...) asparagine glycosylation is found at N239 and N369. The active-site Charge relay system is S537. N629 and N740 each carry an N-linked (GlcNAc...) asparagine glycan.

Belongs to the peptidase S8 family.

It localises to the secreted. In Arabidopsis thaliana (Mouse-ear cress), this protein is Subtilisin-like protease SBT3.12.